We begin with the raw amino-acid sequence, 399 residues long: Lovastatin esterase (399 aa).

The active-site Nucleophile is serine 57. Active-site proton acceptor residues include lysine 60 and tyrosine 170.

The protein belongs to the class-A beta-lactamase family.

The catalysed reaction is lovastatin + H2O = monacolin J + (S)-2-methylbutanoate + H(+). It catalyses the reaction pravastatin lactone + H2O = pravastatin diol lactone + (S)-2-methylbutanoate + H(+). It carries out the reaction mevastatin + H2O = compactin diol lactone + (S)-2-methylbutanoate + H(+). In terms of biological role, esterase that can hydrolyze the side chain of lovastatin to produce monacolin J. Is also able to hydrolyze the side chains of mevastatin and pravastatin, but not simvastatin. This Penicillium rubens (strain ATCC 28089 / DSM 1075 / NRRL 1951 / Wisconsin 54-1255) (Penicillium chrysogenum) protein is Lovastatin esterase.